The primary structure comprises 335 residues: UPF0104 membrane protein PH1989 (335 aa).

The next 8 membrane-spanning stretches (helical) occupy residues Tyr4–Glu24, Asp34–Val54, Gly62–Leu82, Ile122–Ile142, Leu148–Phe168, Leu231–Leu251, Ala266–Val286, and Val304–Val324.

It belongs to the UPF0104 family.

The protein resides in the cell membrane. The protein is UPF0104 membrane protein PH1989 of Pyrococcus horikoshii (strain ATCC 700860 / DSM 12428 / JCM 9974 / NBRC 100139 / OT-3).